The sequence spans 339 residues: MFYKIAQSIMFQMDPERAHNLAIGSLKRTANTPMTAFYAQCIAPKPVTCMGIIFPNPVGLAAGLDKDGEAIDAFHAMGFGHVEVGTVTPRPQPGNDLPRLFRLKPAKGIINRMGFNNKGVDNLVANLKAKKTDILVGVNIGKNKDTPVEEGKNDYLICMDKVYPHAAYIAVNISSPNTPGLRTLQYGDLLDDLLSSLKAKQTELAEQHGKYVPIALKIAPDLTDEEIASIATSLIKNQFDAAIATNTTLSRDGVSGLANANETGGLSGKPLTELSTKVIKKLAAELKGEIPIIGVGGINSSQDALAKFDAGATLVQIYSGFIYQGPKLIKDIVASYSAK.

FMN is bound by residues 62–66 (AGLDK) and Thr86. Residue Lys66 coordinates substrate. 111 to 115 (NRMGF) contributes to the substrate binding site. The FMN site is built by Asn139 and Asn172. Asn172 contributes to the substrate binding site. Ser175 serves as the catalytic Nucleophile. Asn177 contributes to the substrate binding site. Positions 217 and 245 each coordinate FMN. A substrate-binding site is contributed by 246-247 (NT). Residues Gly268, Gly297, and 318 to 319 (YS) contribute to the FMN site.

The protein belongs to the dihydroorotate dehydrogenase family. Type 2 subfamily. As to quaternary structure, monomer. The cofactor is FMN.

The protein localises to the cell membrane. It catalyses the reaction (S)-dihydroorotate + a quinone = orotate + a quinol. The protein operates within pyrimidine metabolism; UMP biosynthesis via de novo pathway; orotate from (S)-dihydroorotate (quinone route): step 1/1. Functionally, catalyzes the conversion of dihydroorotate to orotate with quinone as electron acceptor. The chain is Dihydroorotate dehydrogenase (quinone) from Shewanella amazonensis (strain ATCC BAA-1098 / SB2B).